The following is a 252-amino-acid chain: Triosephosphate isomerase (252 aa).

10 to 12 (NWK) provides a ligand contact to substrate. The Electrophile role is filled by His-96. The active-site Proton acceptor is Glu-168. Substrate-binding positions include Gly-174, Ser-214, and 235–236 (GG).

Belongs to the triosephosphate isomerase family. In terms of assembly, homodimer.

The protein resides in the cytoplasm. It catalyses the reaction D-glyceraldehyde 3-phosphate = dihydroxyacetone phosphate. Its pathway is carbohydrate biosynthesis; gluconeogenesis. The protein operates within carbohydrate degradation; glycolysis; D-glyceraldehyde 3-phosphate from glycerone phosphate: step 1/1. Involved in the gluconeogenesis. Catalyzes stereospecifically the conversion of dihydroxyacetone phosphate (DHAP) to D-glyceraldehyde-3-phosphate (G3P). In Streptococcus pyogenes serotype M1, this protein is Triosephosphate isomerase.